The chain runs to 230 residues: uncharacterized protein (230 aa).

This is an uncharacterized protein from Acanthamoeba polyphaga (Amoeba).